We begin with the raw amino-acid sequence, 301 residues long: Nucleotide-binding protein ELI_02120 (301 aa).

12–19 is an ATP binding site; that stretch reads GMSGAGKS. Residue 62–65 participates in GTP binding; that stretch reads DSRT.

The protein belongs to the RapZ-like family.

Functionally, displays ATPase and GTPase activities. The protein is Nucleotide-binding protein ELI_02120 of Erythrobacter litoralis (strain HTCC2594).